Here is a 237-residue protein sequence, read N- to C-terminus: 2-C-methyl-D-erythritol 4-phosphate cytidylyltransferase (237 aa).

This sequence belongs to the IspD/TarI cytidylyltransferase family. IspD subfamily.

It catalyses the reaction 2-C-methyl-D-erythritol 4-phosphate + CTP + H(+) = 4-CDP-2-C-methyl-D-erythritol + diphosphate. It functions in the pathway isoprenoid biosynthesis; isopentenyl diphosphate biosynthesis via DXP pathway; isopentenyl diphosphate from 1-deoxy-D-xylulose 5-phosphate: step 2/6. Its function is as follows. Catalyzes the formation of 4-diphosphocytidyl-2-C-methyl-D-erythritol from CTP and 2-C-methyl-D-erythritol 4-phosphate (MEP). This Clostridioides difficile (strain 630) (Peptoclostridium difficile) protein is 2-C-methyl-D-erythritol 4-phosphate cytidylyltransferase.